A 469-amino-acid polypeptide reads, in one-letter code: Protein RUFY3 (469 aa).

Phosphothreonine is present on residues Thr5 and Thr12. 3 positions are modified to phosphoserine: Tyr27, Ser34, and Ser49. Thr51 is modified (phosphothreonine). A Phosphoserine modification is found at Asp53. In terms of domain architecture, RUN spans 95-227 (DSDYAPLQQF…IDANFCMKGE (133 aa)). Coiled coils occupy residues 271-362 (NRHL…VEKE) and 422-463 (KSEL…AANK). Residues 321-337 (SYLLESNRKGPKQDRTA) show a composition bias toward basic and acidic residues. Residues 321–342 (SYLLESNRKGPKQDRTAEGQAL) are disordered.

Interacts with PAK1. Interacts (via C-terminus) with Ras-related Rab-5 proteins. Interacts (via C-terminus) with Ras-related Rap-2 proteins. Interacts with PIK3CA and PIK3R1. Interacts (via N-terminus) with FSCN1; this interaction induces neuron axon development. Interacts with DBN1. Interacts (via the second coiled coil) with GTP-, but not GDP-bound ARL8A and ARL8B. Interacts with dynactin/DCTN1 and the dynein intermediate chain DYNC1I1/2. Directly interacts with DYNC1LI1. Phosphorylated by PAK1. Isoform 1 is partially phosphorylated. Expressed in brain (at protein level).

Its subcellular location is the cytoplasm. The protein resides in the endomembrane system. The protein localises to the cell projection. It localises to the invadopodium. It is found in the growth cone. Its subcellular location is the perikaryon. The protein resides in the filopodium. The protein localises to the lamellipodium. It localises to the lysosome. Its function is as follows. ARL8 effector that promotes the coupling of endolysosomes to dynein-dynactin for retrograde transport along microtubules. Acts by binding both GTP-bound ARL8 and dynein-dynactin. In nonneuronal cells, promotes concentration of endolysosomes in the juxtanuclear area. In hippocampal neurons, drives retrograde transport of endolysosomes from the axon to the soma. Plays a role in the generation of neuronal polarity formation and axon growth. Implicated in the formation of a single axon by developing neurons. May inhibit the formation of additional axons by inhibition of PI3K in minor neuronal processes. Plays a role in the formation of F-actin-enriched protrusive structures at the cell periphery. Plays a role in cytoskeletal organization by regulating the subcellular localization of FSCN1 and DBN1 at axonal growth cones. This chain is Protein RUFY3, found in Mus musculus (Mouse).